Consider the following 222-residue polypeptide: MNSNVENLPPHIIRLVYKEVTTLTADPPDGIKVFPNEEDLTDLQVTIEGPEGTPYAGGLFRMKLLLGKDFPASPPKGYFLTKIFHPNVGANGEICVNVLKRDWTAELGIRHVLLTIKCLLIHPNPESALNEEAGRLLLENYEEYAARARLLTEIHGGAGGPSGRAEAGRALASGTEASSTDPGAPGGPGGAEGPMAKKHAGERDKKLAAKKKTDKKRALRRL.

Met-1 bears the N-acetylmethionine mark. The 147-residue stretch at His-11–Gly-157 folds into the UBC core domain. The Glycyl thioester intermediate role is filled by Cys-95. The interval Gly-156–Leu-222 is disordered. At Ser-173 the chain carries Phosphoserine. Basic residues predominate over residues Ala-208–Leu-222.

This sequence belongs to the ubiquitin-conjugating enzyme family. In terms of assembly, component of the APC/C complex, composed of at least 14 distinct subunits that assemble into a complex of at least 19 chains with a combined molecular mass of around 1.2 MDa. Within this complex, directly interacts with ANAPC2 and ANAPC4. Interacts with CDC20, FZR1/CDH1 and VHL. Autoubiquitinated by the APC/C complex during G1, leading to its degradation by the proteasome.

The catalysed reaction is S-ubiquitinyl-[E1 ubiquitin-activating enzyme]-L-cysteine + [E2 ubiquitin-conjugating enzyme]-L-cysteine = [E1 ubiquitin-activating enzyme]-L-cysteine + S-ubiquitinyl-[E2 ubiquitin-conjugating enzyme]-L-cysteine.. The protein operates within protein modification; protein ubiquitination. Functionally, accepts ubiquitin from the E1 complex and catalyzes its covalent attachment to other proteins. Catalyzes 'Lys-11'-linked polyubiquitination. Acts as an essential factor of the anaphase promoting complex/cyclosome (APC/C), a cell cycle-regulated ubiquitin ligase that controls progression through mitosis. Acts by specifically elongating 'Lys-11'-linked polyubiquitin chains initiated by the E2 enzyme UBE2C/UBCH10 on APC/C substrates, enhancing the degradation of APC/C substrates by the proteasome and promoting mitotic exit. Also acts by elongating ubiquitin chains initiated by the E2 enzyme UBE2D1/UBCH5 in vitro; it is however unclear whether UBE2D1/UBCH5 acts as an E2 enzyme for the APC/C in vivo. Also involved in ubiquitination and subsequent degradation of VHL, resulting in an accumulation of HIF1A. In vitro able to promote polyubiquitination using all 7 ubiquitin Lys residues, except 'Lys-48'-linked polyubiquitination. The sequence is that of Ubiquitin-conjugating enzyme E2 S (UBE2S) from Homo sapiens (Human).